A 204-amino-acid chain; its full sequence is Cardiotrophin-2 (204 aa).

Positions 1-22 are cleaved as a signal peptide; the sequence is MYCLLATPLCLLSLLLPPLSPA. Asparagine 44 carries N-linked (GlcNAc...) asparagine glycosylation.

It belongs to the IL-6 superfamily. In terms of assembly, binds to tripartite CNTF receptor complex consisting of CNTF alpha chain, LIFR and IL6ST (in vitro). As to expression, not detected in adult tissues.

The protein localises to the secreted. Functionally, increases the platelet count associated with splenomegaly. May have an important role in neuronal precursor development and maturation. This chain is Cardiotrophin-2 (Ctf2), found in Mus musculus (Mouse).